Reading from the N-terminus, the 875-residue chain is Ectonucleotide pyrophosphatase/phosphodiesterase family member 3 (875 aa).

Residues 1 to 11 lie on the Cytoplasmic side of the membrane; sequence MDSRLALATEE. The helical; Signal-anchor for type II membrane protein transmembrane segment at 12-30 threads the bilayer; that stretch reads PIKKDSLKRYKILCAVLLA. Residues 31-875 are Extracellular-facing; that stretch reads LLVIVSLGLG…TYLPTFETII (845 aa). 2 consecutive SMB domains span residues 51 to 94 and 95 to 139; these read HIGS…VKST and QIWT…GEVP. Disulfide bonds link C55–C72, C59–C90, C70–C83, C76–C82, C99–C116, C104–C134, C114–C127, C120–C126, C145–C191, and C153–C365. The Cell attachment site motif lies at 79 to 81; the sequence is RGD. The interval 161 to 545 is phosphodiesterase; the sequence is PVILFSMDGF…HGSLNHLLKA (385 aa). Residue D168 participates in Zn(2+) binding. Residue K205 coordinates ATP. T206 contributes to the Zn(2+) binding site. Residue T206 is the Nucleophile of the active site. N227 serves as a coordination point for ATP. N237 carries N-linked (GlcNAc...) asparagine glycosylation. D276 lines the ATP pocket. N-linked (GlcNAc...) asparagine glycosylation is found at N280 and N289. Residue Y290 coordinates ATP. Zn(2+)-binding residues include D326, H330, D373, and H374. 6 cysteine pairs are disulfide-bonded: C381–C478, C429–C818, C562–C623, C575–C679, C577–C664, and C787–C797. A Zn(2+)-binding site is contributed by H483. Residues N533, N574, N594, and N702 are each glycosylated (N-linked (GlcNAc...) asparagine). The segment at 582–875 is nuclease; it reads TSGQEEQVNQ…TYLPTFETII (294 aa). Residues D752, N754, D756, H758, and D760 each coordinate Ca(2+). A glycan (N-linked (GlcNAc...) asparagine) is linked at N789.

The protein belongs to the nucleotide pyrophosphatase/phosphodiesterase family. As to quaternary structure, monomer and homodimer. Requires Zn(2+) as cofactor. The N-terminal is blocked. Post-translationally, N-glycosylated. N-glycosylation is necessary for normal transport to the cell membrane, but is not the apical targeting signal. As to expression, detected in intestinal epithelium and liver (at protein level).

The protein resides in the cell membrane. It localises to the apical cell membrane. Its subcellular location is the secreted. It carries out the reaction Hydrolytically removes 5'-nucleotides successively from the 3'-hydroxy termini of 3'-hydroxy-terminated oligonucleotides.. The enzyme catalyses a ribonucleoside 5'-triphosphate + H2O = a ribonucleoside 5'-phosphate + diphosphate + H(+). The catalysed reaction is ATP + H2O = AMP + diphosphate + H(+). It catalyses the reaction CTP + H2O = CMP + diphosphate + H(+). It carries out the reaction GTP + H2O = GMP + diphosphate + H(+). The enzyme catalyses UTP + H2O = UMP + diphosphate + H(+). The catalysed reaction is UDP-N-acetyl-alpha-D-glucosamine + H2O = N-acetyl-alpha-D-glucosamine 1-phosphate + UMP + 2 H(+). It catalyses the reaction P(1),P(3)-bis(5'-adenosyl) triphosphate + H2O = AMP + ADP + 2 H(+). It carries out the reaction P(1),P(4)-bis(5'-adenosyl) tetraphosphate + H2O = AMP + ATP + 2 H(+). The enzyme catalyses P(1),P(5)-bis(5'-adenosyl) pentaphosphate + H2O = adenosine 5'-tetraphosphate + AMP + 2 H(+). The catalysed reaction is P(1),P(4)-bis(5'-guanosyl) tetraphosphate + H2O = GMP + GTP + 2 H(+). Functionally, hydrolase that metabolizes extracellular nucleotides, including ATP, GTP, UTP and CTP. Limits mast cells and basophils response during inflammation and during the chronic phases of allergic responses by eliminating extracellular ATP, a signaling molecule activating these cells in an autocrine manner. Metabolizes extracellular ATP in the lumen of the small intestine, and thereby prevents ATP-induced apoptosis of intestinal plasmacytoid dendritic cells. Has a broad specificity and can also hydrolyze UDP-GlcNAc into UMP and GlcNAc-1-phosphate and potentially several other intracellular nucleotide sugars, including UDP-GalNAc, CMP-NeuAc, GDP-Fuc, and UDP-GlcA. Thereby, could modulate glycan biosynthesis and protein glycosylation. Can hydrolyze extracellular dinucleoside polyphosphates, including the vasoactive adenosine polyphosphates as well. In addition, displays an alkaline phosphodiesterase activity in vitro. The protein is Ectonucleotide pyrophosphatase/phosphodiesterase family member 3 of Rattus norvegicus (Rat).